A 34-amino-acid chain; its full sequence is Photosystem I reaction center subunit XII (34 aa).

A helical transmembrane segment spans residues valine 4–alanine 24.

Belongs to the PsaM family.

Its subcellular location is the cellular thylakoid membrane. In Synechococcus sp. (strain CC9605), this protein is Photosystem I reaction center subunit XII.